The sequence spans 189 residues: Holliday junction branch migration complex subunit RuvA (189 aa).

Residues 1 to 63 are domain I; the sequence is MIYAMYGVLE…DDEISLYGFS (63 aa). A domain II region spans residues 64–135; it reads DVLKLKLFEK…ELKDSMKEFD (72 aa). The segment at 135-139 is flexible linker; the sequence is DVTLT. The interval 140-189 is domain III; sequence EKDKKILEAIEALVTLGFSRNQSKKAVTQILKKDDSLDDIIKKALKFLSR.

Belongs to the RuvA family. As to quaternary structure, homotetramer. Forms an RuvA(8)-RuvB(12)-Holliday junction (HJ) complex. HJ DNA is sandwiched between 2 RuvA tetramers; dsDNA enters through RuvA and exits via RuvB. An RuvB hexamer assembles on each DNA strand where it exits the tetramer. Each RuvB hexamer is contacted by two RuvA subunits (via domain III) on 2 adjacent RuvB subunits; this complex drives branch migration. In the full resolvosome a probable DNA-RuvA(4)-RuvB(12)-RuvC(2) complex forms which resolves the HJ.

The protein localises to the cytoplasm. Functionally, the RuvA-RuvB-RuvC complex processes Holliday junction (HJ) DNA during genetic recombination and DNA repair, while the RuvA-RuvB complex plays an important role in the rescue of blocked DNA replication forks via replication fork reversal (RFR). RuvA specifically binds to HJ cruciform DNA, conferring on it an open structure. The RuvB hexamer acts as an ATP-dependent pump, pulling dsDNA into and through the RuvAB complex. HJ branch migration allows RuvC to scan DNA until it finds its consensus sequence, where it cleaves and resolves the cruciform DNA. The polypeptide is Holliday junction branch migration complex subunit RuvA (Thermosipho melanesiensis (strain DSM 12029 / CIP 104789 / BI429)).